Consider the following 73-residue polypeptide: Conotoxin CnIIIG (73 aa).

An N-terminal signal peptide occupies residues 1–19 (MSKLGVLLTICLLLLPLTA). The propeptide occupies 20–48 (LPMDEDQPADQPADRMQDDISSEQYPLFD). At Gln-51 the chain carries Pyrrolidone carboxylic acid. Disulfide bonds link Cys-53–Cys-72, Cys-54–Cys-70, and Cys-60–Cys-73.

It belongs to the conotoxin M superfamily. Expressed by the venom duct.

The protein resides in the secreted. Its function is as follows. Shows a paralytic effect in fish. This is Conotoxin CnIIIG from Conus consors (Singed cone).